The following is a 652-amino-acid chain: Meiotic sister-chromatid recombination protein 3 (652 aa).

Disordered stretches follow at residues 123–151 (RTGT…SRTG), 304–406 (NNSK…SDQK), 470–576 (EQIQ…ESGA), and 594–652 (ATPV…INTK). The segment covering 125 to 141 (GTASSRGVGSRTGSMTG) has biased composition (polar residues). A compositionally biased stretch (low complexity) spans 316–336 (VQKQGVQQQQEVQHQGISQVQ). Polar residues predominate over residues 337–361 (NTEAKSVGRKSTMSKRMTLRDTPNA). Residues 380 to 390 (TKRKSIFKSKK) are compositionally biased toward basic residues. 2 stretches are compositionally biased toward polar residues: residues 506 to 517 (QFSQENSGNQPP) and 524 to 544 (QYSQ…NFDT). A compositionally biased stretch (low complexity) spans 545-569 (NASGHNINHNNNNHNNNNNTSSSSS). Residues 612 to 621 (SSPSIDNTPR) are compositionally biased toward polar residues. Residues 640–652 (RLFKSNKTHINTK) are compositionally biased toward basic residues.

It is found in the cell membrane. Its function is as follows. May be involved in the control of meiotic sister-chromatid recombination. This is Meiotic sister-chromatid recombination protein 3 (MSC3) from Kluyveromyces lactis (strain ATCC 8585 / CBS 2359 / DSM 70799 / NBRC 1267 / NRRL Y-1140 / WM37) (Yeast).